The chain runs to 730 residues: Envelope glycoprotein H (730 aa).

A signal peptide spans 1 to 21; it reads MQGLAFLAALACWRCISLTCG. At 22–706 the chain is on the virion surface side; the sequence is ATGALPTTAT…MYRRRAASAL (685 aa). N-linked (GlcNAc...) asparagine; by host glycans are attached at residues N46, N54, N101, N125, N131, N188, N209, N215, N267, N274, N365, N556, N613, N626, and N688. The segment at 190 to 254 is interaction with gL; it reads SGVALYGVVS…RNAKYALVAI (65 aa). A helical membrane pass occupies residues 707–727; it reads FLILSFIGFSGVIYFLYRLFS. Residues 728–730 are Intravirion-facing; that stretch reads ILY.

The protein belongs to the herpesviridae glycoprotein H family. Interacts with glycoprotein L (gL); this interaction is necessary for the correct processing and cell surface expression of gH. The heterodimer gH/gL seems to interact with gB trimers during fusion. When in complex with gL, interacts with host EPHA2; this interaction triggers EPHA2 phosphorylation and endocytosis allowing KSHV entry. In terms of processing, N-glycosylated, O-glycosylated, and sialylated.

The protein localises to the virion membrane. Its subcellular location is the host cell membrane. The protein resides in the host endosome membrane. The heterodimer glycoprotein H-glycoprotein L is required for the fusion of viral and plasma membranes leading to virus entry into the host cell. Following initial binding to host receptor, membrane fusion is mediated by the fusion machinery composed of gB and the heterodimer gH/gL. May also be involved in the fusion between the virion envelope and the outer nuclear membrane during virion morphogenesis. Targets host EPHA2 to promote KSHV entry. In Homo sapiens (Human), this protein is Envelope glycoprotein H.